The sequence spans 226 residues: Ribonuclease 3 (226 aa).

One can recognise an RNase III domain in the interval 7–129; sequence LPRLCRTLGY…IIGAIYLDSD (123 aa). Position 42 (Glu42) interacts with Mg(2+). Residue Asp46 is part of the active site. Residues Asp115 and Glu118 each coordinate Mg(2+). Glu118 is a catalytic residue. Residues 156–226 enclose the DRBM domain; sequence DAKTLLQEYL…AAQVLELLKK (71 aa).

This sequence belongs to the ribonuclease III family. As to quaternary structure, homodimer. Requires Mg(2+) as cofactor.

The protein resides in the cytoplasm. The enzyme catalyses Endonucleolytic cleavage to 5'-phosphomonoester.. Digests double-stranded RNA. Involved in the processing of primary rRNA transcript to yield the immediate precursors to the large and small rRNAs (23S and 16S). Processes some mRNAs, and tRNAs when they are encoded in the rRNA operon. Processes pre-crRNA and tracrRNA of type II CRISPR loci if present in the organism. The polypeptide is Ribonuclease 3 (Shewanella sp. (strain MR-7)).